Reading from the N-terminus, the 633-residue chain is ABC transporter G family member 1 (633 aa).

The 243-residue stretch at 23-265 (LTWEDLWVTA…FALSGFPCPT (243 aa)) folds into the ABC transporter domain. An ATP-binding site is contributed by 60–67 (GPSGSGKS). The 213-residue stretch at 340 to 552 (TQSLVLTRRS…AYEGMFKNEF (213 aa)) folds into the ABC transmembrane type-2 domain. N-linked (GlcNAc...) asparagine glycosylation is present at N352. Transmembrane regions (helical) follow at residues 364 to 384 (LAVY…VGFS), 394 to 414 (MLMF…PSFV), 440 to 460 (LSAM…AYFM), 470 to 490 (FIYF…LMMI), 498 to 518 (FLMG…SGGF), and 580 to 600 (IDLV…LLVV).

This sequence belongs to the ABC transporter superfamily. ABCG family. Homodimer. As to expression, restricted to the petals, with the highest expression in the limb and, to a lesser extent, in petal tubes, probably in both epidermal and mesophyll cell layers.

It is found in the cell membrane. Its function is as follows. ABC transporter controlling the release of volatile organic compounds (VOCs), including floral volatile benzenoids and phenylpropanoids (FVBP), in flowers of fragrant cultivars (e.g. cv. Mitchell and cv. V26). This scent, mostly produced in the evening and night by the petals, attracts the pollinators (e.g. the night-active hawkmoth pollinator Manduca sexta). In Petunia hybrida (Petunia), this protein is ABC transporter G family member 1.